The following is a 598-amino-acid chain: Aluminum-activated malate transporter 9 (598 aa).

6 helical membrane passes run I88–Q108, Y117–L137, A144–F164, I170–P190, A194–F214, and F227–I247.

It belongs to the aromatic acid exporter (TC 2.A.85) family. In terms of tissue distribution, expressed in hypocotyls, leaves, roots, flowers, sepals and stamina. In leaves, expressed almost exclusively in mesophyll cells.

It is found in the vacuole membrane. Its activity is regulated as follows. Slow activation by external aluminum. In terms of biological role, vacuolar malate channel. Has a higher selectivity for malate than for fumarate. Also exhibits a weak chloride conductance. The protein is Aluminum-activated malate transporter 9 (ALMT9) of Arabidopsis thaliana (Mouse-ear cress).